Reading from the N-terminus, the 453-residue chain is Acyl-coenzyme A thioesterase 2, mitochondrial (453 aa).

The transit peptide at 1–42 (MVASSFAVLRASRLCQWGWKSWTQLSGPPPLSTGGRTTFART) directs the protein to the mitochondrion. Lys-83 is subject to N6-acetyllysine. Residues Ser-273, Asp-365, and His-399 each act as charge relay system in the active site. An N6-succinyllysine modification is found at Lys-447.

The protein belongs to the C/M/P thioester hydrolase family. As to quaternary structure, monomer. In terms of processing, the N-terminus is blocked. Constitutively expressed in heart and brown fat. Strongly induced in liver, and weakly in kidney, in peroxisome proliferator treated rat.

The protein localises to the mitochondrion matrix. The catalysed reaction is hexadecanoyl-CoA + H2O = hexadecanoate + CoA + H(+). The enzyme catalyses tetradecanoyl-CoA + H2O = tetradecanoate + CoA + H(+). It carries out the reaction octadecanoyl-CoA + H2O = octadecanoate + CoA + H(+). It catalyses the reaction eicosanoyl-CoA + H2O = eicosanoate + CoA + H(+). The catalysed reaction is decanoyl-CoA + H2O = decanoate + CoA + H(+). The enzyme catalyses dodecanoyl-CoA + H2O = dodecanoate + CoA + H(+). It carries out the reaction (9Z)-octadecenoyl-CoA + H2O = (9Z)-octadecenoate + CoA + H(+). It catalyses the reaction (9Z)-hexadecenoyl-CoA + H2O = (9Z)-hexadecenoate + CoA + H(+). The catalysed reaction is (9E)-octadecenoyl-CoA + H2O = (9E)-octadecenoate + CoA + H(+). The enzyme catalyses (9Z,12Z)-octadecadienoyl-CoA + H2O = (9Z,12Z)-octadecadienoate + CoA + H(+). It participates in lipid metabolism; fatty acid metabolism. In terms of biological role, catalyzes the hydrolysis of acyl-CoAs into free fatty acids and coenzyme A (CoASH), regulating their respective intracellular levels. Displays higher activity toward long chain acyl CoAs (C14-C20). The enzyme is involved in enhancing the hepatic fatty acid oxidation in mitochondria. The sequence is that of Acyl-coenzyme A thioesterase 2, mitochondrial (Acot2) from Rattus norvegicus (Rat).